A 699-amino-acid chain; its full sequence is Elongation factor G (699 aa).

In terms of domain architecture, tr-type G spans 8 to 283 (EHIRNIGICA…AVVYFLPSPI (276 aa)). GTP contacts are provided by residues 17-24 (AHIDAGKT), 81-85 (DTPGH), and 135-138 (NKMD).

This sequence belongs to the TRAFAC class translation factor GTPase superfamily. Classic translation factor GTPase family. EF-G/EF-2 subfamily.

It is found in the cytoplasm. In terms of biological role, catalyzes the GTP-dependent ribosomal translocation step during translation elongation. During this step, the ribosome changes from the pre-translocational (PRE) to the post-translocational (POST) state as the newly formed A-site-bound peptidyl-tRNA and P-site-bound deacylated tRNA move to the P and E sites, respectively. Catalyzes the coordinated movement of the two tRNA molecules, the mRNA and conformational changes in the ribosome. The protein is Elongation factor G of Rickettsia akari (strain Hartford).